Reading from the N-terminus, the 614-residue chain is Probable LRR receptor-like serine/threonine-protein kinase At5g45780 (614 aa).

Positions 1–26 (MEISLMKFLFLGIWVYYYSVLDSVSA) are cleaved as a signal peptide. Residues 27 to 242 (MDSLLSPKGV…NSKHHSLVLS (216 aa)) lie on the Extracellular side of the membrane. LRR repeat units lie at residues 104–126 (HLHT…LGQL), 128–151 (ELET…GFLT), 152–174 (HLNY…VAGL), and 176–197 (GLSF…ISAK). 3 N-linked (GlcNAc...) asparagine glycosylation sites follow: Asn-186, Asn-193, and Asn-224. Residues 243-263 (FAFGIVVAFIISLMFLFFWVL) form a helical membrane-spanning segment. The Cytoplasmic portion of the chain corresponds to 264 to 614 (WHRSRLSRSH…IEAIELSGPR (351 aa)). Thr-297 carries the phosphothreonine modification. The Protein kinase domain maps to 300 to 576 (FSPKNILGQG…QVLKVLEGLV (277 aa)). 306-314 (LGQGGFGMV) is an ATP binding site. Thr-323 bears the Phosphothreonine mark. Position 328 (Lys-328) interacts with ATP. Phosphoserine is present on Ser-380. Catalysis depends on Asp-426, which acts as the Proton acceptor. A phosphothreonine mark is found at Thr-459, Thr-460, and Thr-465. Tyr-473 is subject to Phosphotyrosine. Ser-475 carries the phosphoserine modification. Position 476 is a phosphothreonine (Thr-476). A Phosphoserine modification is found at Ser-480. Residue Thr-555 is modified to Phosphothreonine.

This sequence belongs to the protein kinase superfamily. Ser/Thr protein kinase family.

It localises to the membrane. It catalyses the reaction L-seryl-[protein] + ATP = O-phospho-L-seryl-[protein] + ADP + H(+). The enzyme catalyses L-threonyl-[protein] + ATP = O-phospho-L-threonyl-[protein] + ADP + H(+). This chain is Probable LRR receptor-like serine/threonine-protein kinase At5g45780, found in Arabidopsis thaliana (Mouse-ear cress).